The sequence spans 78 residues: Sec-independent protein translocase protein TatA (78 aa).

Residues 1–21 (MGSLSIWHWLIVLLIVALVFG) traverse the membrane as a helical segment. Composition is skewed to basic and acidic residues over residues 39–57 (FKEG…RDQL) and 65–78 (VDAK…GDSR). Residues 39-78 (FKEGMKDGETPEGQQRDQLSRTNTVDVDAKEKAPHSGDSR) form a disordered region.

It belongs to the TatA/E family. As to quaternary structure, the Tat system comprises two distinct complexes: a TatABC complex, containing multiple copies of TatA, TatB and TatC subunits, and a separate TatA complex, containing only TatA subunits. Substrates initially bind to the TatABC complex, which probably triggers association of the separate TatA complex to form the active translocon.

The protein localises to the cell inner membrane. Part of the twin-arginine translocation (Tat) system that transports large folded proteins containing a characteristic twin-arginine motif in their signal peptide across membranes. TatA could form the protein-conducting channel of the Tat system. This chain is Sec-independent protein translocase protein TatA, found in Paraburkholderia phymatum (strain DSM 17167 / CIP 108236 / LMG 21445 / STM815) (Burkholderia phymatum).